The chain runs to 478 residues: Cytochrome c-552 (478 aa).

Positions 1 to 26 (MARKTLRARRFFSLIFPFFFMTSVYA) are cleaved as a signal peptide. His-94 lines the heme c pocket. Heme contacts are provided by Cys-122, Cys-125, and Lys-126. Residues Cys-160, Cys-163, His-164, Cys-209, Cys-212, and His-213 each contribute to the heme c site. Ca(2+) contacts are provided by Glu-215, Tyr-216, Lys-261, and Gln-263. Tyr-216 contributes to the substrate binding site. Position 264 (His-264) interacts with substrate. The heme c site is built by His-275, Cys-282, Cys-285, His-286, His-301, Cys-314, Cys-317, His-318, and His-393.

The protein belongs to the cytochrome c-552 family. The cofactor is Ca(2+). It depends on heme c as a cofactor.

It is found in the periplasm. The catalysed reaction is 6 Fe(III)-[cytochrome c] + NH4(+) + 2 H2O = 6 Fe(II)-[cytochrome c] + nitrite + 8 H(+). The protein operates within nitrogen metabolism; nitrate reduction (assimilation). Functionally, catalyzes the reduction of nitrite to ammonia, consuming six electrons in the process. This is Cytochrome c-552 from Salmonella arizonae (strain ATCC BAA-731 / CDC346-86 / RSK2980).